A 685-amino-acid polypeptide reads, in one-letter code: DNA-directed RNA polymerase subunit beta' (685 aa).

Residues Cys69, Cys71, Cys87, and Cys90 each contribute to the Zn(2+) site. Residues Asp489, Asp491, and Asp493 each coordinate Mg(2+).

Belongs to the RNA polymerase beta' chain family. RpoC1 subfamily. In terms of assembly, in plastids the minimal PEP RNA polymerase catalytic core is composed of four subunits: alpha, beta, beta', and beta''. When a (nuclear-encoded) sigma factor is associated with the core the holoenzyme is formed, which can initiate transcription. The cofactor is Mg(2+). Zn(2+) is required as a cofactor.

The protein localises to the plastid. It is found in the chloroplast. The catalysed reaction is RNA(n) + a ribonucleoside 5'-triphosphate = RNA(n+1) + diphosphate. Its function is as follows. DNA-dependent RNA polymerase catalyzes the transcription of DNA into RNA using the four ribonucleoside triphosphates as substrates. The polypeptide is DNA-directed RNA polymerase subunit beta' (Gossypium hirsutum (Upland cotton)).